The chain runs to 975 residues: GPI inositol-deacylase (975 aa).

Residues 27 to 47 (STLVIIVGLLLLCIITSTHIS) form a helical membrane-spanning segment. N-linked (GlcNAc...) asparagine glycosylation is present at N49. Residue S210 is part of the active site. Residues N276, N384, N407, N419, and N488 are each glycosylated (N-linked (GlcNAc...) asparagine). Residues 655–675 (LAFASIPISIIALVLCYQFYY) form a helical membrane-spanning segment. N696 is a glycosylation site (N-linked (GlcNAc...) asparagine). 3 helical membrane-spanning segments follow: residues 699–719 (LLIF…AILT), 751–771 (FVWW…FIIL), and 818–838 (VCFI…FILV). N867 carries N-linked (GlcNAc...) asparagine glycosylation. Helical transmembrane passes span 868–888 (VSFL…VVVF), 932–952 (NWLI…MYGI), and 955–975 (LYWV…LTIL).

This sequence belongs to the GPI inositol-deacylase family.

It localises to the endoplasmic reticulum membrane. Involved in inositol deacylation of GPI-anchored proteins which plays important roles in the quality control and ER-associated degradation of GPI-anchored proteins. This is GPI inositol-deacylase (BST1) from Kluyveromyces lactis (strain ATCC 8585 / CBS 2359 / DSM 70799 / NBRC 1267 / NRRL Y-1140 / WM37) (Yeast).